A 671-amino-acid polypeptide reads, in one-letter code: Gametogenetin-binding protein 2-like (671 aa).

2 disordered regions span residues 372–489 and 532–562; these read REQK…ARVQ and VRDS…SEVS. The span at 373–384 shows a compositional bias: basic residues; that stretch reads EQKKLKKKKKKD. A compositionally biased stretch (basic and acidic residues) spans 385–395; the sequence is EKKNLLHRQCD. Positions 396–420 are enriched in acidic residues; it reads DTEANESDEEEEELRNEELDLEEES. Residues 455-472 show a composition bias toward basic residues; it reads TKSKPKKQSKKKKQKKAA. Composition is skewed to polar residues over residues 476-486 and 546-557; these read MGNQKQMQATA and GSRTSSAISSPE.

The sequence is that of Gametogenetin-binding protein 2-like from Drosophila melanogaster (Fruit fly).